The following is a 57-amino-acid chain: Small ribosomal subunit protein eS31 (57 aa).

Cys29, Cys32, Cys47, and Cys50 together coordinate Zn(2+). The segment at 29-50 (CPRCGPGVFMANHKDRWSCGRC) adopts a C4-type zinc-finger fold.

Belongs to the eukaryotic ribosomal protein eS31 family. Part of the 30S ribosomal subunit. Zn(2+) serves as cofactor.

In Thermococcus kodakarensis (strain ATCC BAA-918 / JCM 12380 / KOD1) (Pyrococcus kodakaraensis (strain KOD1)), this protein is Small ribosomal subunit protein eS31.